Here is a 443-residue protein sequence, read N- to C-terminus: Xaa-Pro dipeptidase (443 aa).

5 residues coordinate Mn(2+): Asp246, Asp257, His339, Glu384, and Glu423.

This sequence belongs to the peptidase M24B family. Bacterial-type prolidase subfamily. It depends on Mn(2+) as a cofactor.

It carries out the reaction Xaa-L-Pro dipeptide + H2O = an L-alpha-amino acid + L-proline. In terms of biological role, splits dipeptides with a prolyl residue in the C-terminal position. The sequence is that of Xaa-Pro dipeptidase from Erwinia tasmaniensis (strain DSM 17950 / CFBP 7177 / CIP 109463 / NCPPB 4357 / Et1/99).